A 1241-amino-acid chain; its full sequence is DNA-directed RNA polymerase subunit beta (1241 aa).

The segment at 1186–1210 (EDEIVPTAEKRSSNQDEEALELVDN) is disordered. Acidic residues predominate over residues 1200-1210 (QDEEALELVDN).

The protein belongs to the RNA polymerase beta chain family. In terms of assembly, the RNAP catalytic core consists of 2 alpha, 1 beta, 1 beta' and 1 omega subunit. When a sigma factor is associated with the core the holoenzyme is formed, which can initiate transcription.

The catalysed reaction is RNA(n) + a ribonucleoside 5'-triphosphate = RNA(n+1) + diphosphate. Functionally, DNA-dependent RNA polymerase catalyzes the transcription of DNA into RNA using the four ribonucleoside triphosphates as substrates. This Clostridium novyi (strain NT) protein is DNA-directed RNA polymerase subunit beta.